Here is a 256-residue protein sequence, read N- to C-terminus: Hydroxyacylglutathione hydrolase (256 aa).

Residues H57, H59, D61, H62, H115, D134, and H172 each contribute to the Zn(2+) site.

The protein belongs to the metallo-beta-lactamase superfamily. Glyoxalase II family. Monomer. The cofactor is Zn(2+).

It catalyses the reaction an S-(2-hydroxyacyl)glutathione + H2O = a 2-hydroxy carboxylate + glutathione + H(+). The protein operates within secondary metabolite metabolism; methylglyoxal degradation; (R)-lactate from methylglyoxal: step 2/2. In terms of biological role, thiolesterase that catalyzes the hydrolysis of S-D-lactoyl-glutathione to form glutathione and D-lactic acid. The polypeptide is Hydroxyacylglutathione hydrolase (Maricaulis maris (strain MCS10) (Caulobacter maris)).